Here is a 582-residue protein sequence, read N- to C-terminus: GDP-Man:Man(3)GlcNAc(2)-PP-Dol alpha-1,2-mannosyltransferase (582 aa).

Residues 1-12 (MESCWLTMESYQ) lie on the Lumenal side of the membrane. The helical transmembrane segment at 13-33 (AALVVCIVSGLILAVAGYGNV) threads the bilayer. The Cytoplasmic portion of the chain corresponds to 34–240 (RRLACEFLLK…CCPPDVWCDT (207 aa)). Residues 241–261 (MGYPFGYPFVSWLCRIPIITY) constitute an intramembrane region (helical). Residues 262-461 (THYPVVSIDM…EHFGIAVVEY (200 aa)) are Cytoplasmic-facing. The helical intramembrane region spans 462-482 (AASGLITLAHASAGPLLDIIV). At 483–582 (PWDIEGDKQL…LHTLRNDKVE (100 aa)) the chain is on the cytoplasmic side.

It belongs to the glycosyltransferase group 1 family.

The protein resides in the endoplasmic reticulum membrane. The enzyme catalyses an alpha-D-Man-(1-&gt;3)-[alpha-D-Man-(1-&gt;6)]-beta-D-Man-(1-&gt;4)-beta-D-GlcNAc-(1-&gt;4)-alpha-D-GlcNAc-diphospho-di-trans,poly-cis-dolichol + 2 GDP-alpha-D-mannose = an alpha-D-Man-(1-&gt;2)-alpha-D-Man-(1-&gt;2)-alpha-D-Man-(1-&gt;3)-[alpha-D-Man-(1-&gt;6)]-beta-D-Man-(1-&gt;4)-beta-D-GlcNAc-(1-&gt;4)-alpha-D-GlcNAc-diphospho-di-trans,poly-cis-dolichol + 2 GDP + 2 H(+). It functions in the pathway protein modification; protein glycosylation. Its function is as follows. GDP-Man:Man(3)GlcNAc(2)-PP-Dol alpha-1,2-mannosyltransferase that operates in the biosynthetic pathway of dolichol-linked oligosaccharides, the glycan precursors employed in protein asparagine (N)-glycosylation. The assembly of dolichol-linked oligosaccharides begins on the cytosolic side of the endoplasmic reticulum membrane and finishes in its lumen. The sequential addition of sugars to dolichol pyrophosphate produces dolichol-linked oligosaccharides containing fourteen sugars, including two GlcNAcs, nine mannoses and three glucoses. Once assembled, the oligosaccharide is transferred from the lipid to nascent proteins by oligosaccharyltransferases. Catalyzes, on the cytoplasmic face of the endoplasmic reticulum, the addition of the fourth and fifth mannose residues to the dolichol-linked oligosaccharide chain, to produce Man(5)GlcNAc(2)-PP-dolichol core oligosaccharide. The polypeptide is GDP-Man:Man(3)GlcNAc(2)-PP-Dol alpha-1,2-mannosyltransferase (ALG11) (Eremothecium gossypii (strain ATCC 10895 / CBS 109.51 / FGSC 9923 / NRRL Y-1056) (Yeast)).